The chain runs to 62 residues: MVKGTTSMGKHGRSKTHIRCRRCGRHSFNVAKGYCAACGFGRSKRIRHYNWANKKVNRIRIV.

Zn(2+) is bound by residues C20, C23, C35, and C38. The segment at C20–C38 adopts a C4-type zinc-finger fold.

Belongs to the eukaryotic ribosomal protein eL37 family. Zn(2+) serves as cofactor.

Functionally, binds to the 23S rRNA. This Desulfurococcus amylolyticus (strain DSM 18924 / JCM 16383 / VKM B-2413 / 1221n) (Desulfurococcus kamchatkensis) protein is Large ribosomal subunit protein eL37.